We begin with the raw amino-acid sequence, 404 residues long: Formate-dependent phosphoribosylglycinamide formyltransferase (404 aa).

Residues 25-26 (EL) and Glu-85 each bind N(1)-(5-phospho-beta-D-ribosyl)glycinamide. ATP is bound by residues Arg-118, Lys-159, 164-169 (SSGKGQ), 199-202 (EGFI), and Glu-207. In terms of domain architecture, ATP-grasp spans 123 to 318 (RLAAEELGLA…EFELHARAIL (196 aa)). Glu-277 and Glu-289 together coordinate Mg(2+). Residues Asp-296, Lys-365, and 372–373 (RR) each bind N(1)-(5-phospho-beta-D-ribosyl)glycinamide.

The protein belongs to the PurK/PurT family. Homodimer.

It carries out the reaction N(1)-(5-phospho-beta-D-ribosyl)glycinamide + formate + ATP = N(2)-formyl-N(1)-(5-phospho-beta-D-ribosyl)glycinamide + ADP + phosphate + H(+). It functions in the pathway purine metabolism; IMP biosynthesis via de novo pathway; N(2)-formyl-N(1)-(5-phospho-D-ribosyl)glycinamide from N(1)-(5-phospho-D-ribosyl)glycinamide (formate route): step 1/1. Involved in the de novo purine biosynthesis. Catalyzes the transfer of formate to 5-phospho-ribosyl-glycinamide (GAR), producing 5-phospho-ribosyl-N-formylglycinamide (FGAR). Formate is provided by PurU via hydrolysis of 10-formyl-tetrahydrofolate. In Burkholderia vietnamiensis (strain G4 / LMG 22486) (Burkholderia cepacia (strain R1808)), this protein is Formate-dependent phosphoribosylglycinamide formyltransferase.